The chain runs to 78 residues: Large ribosomal subunit protein bL28B (78 aa).

It belongs to the bacterial ribosomal protein bL28 family.

The chain is Large ribosomal subunit protein bL28B (rpmB2) from Streptomyces coelicolor (strain ATCC BAA-471 / A3(2) / M145).